Here is a 124-residue protein sequence, read N- to C-terminus: Small ribosomal subunit protein bS6 (124 aa).

The interval 96–124 (ETGPSPMMKEVQREEAKKAAAAQPAEAQA) is disordered. A compositionally biased stretch (low complexity) spans 114 to 124 (AAAAQPAEAQA).

The protein belongs to the bacterial ribosomal protein bS6 family.

Its function is as follows. Binds together with bS18 to 16S ribosomal RNA. The protein is Small ribosomal subunit protein bS6 of Burkholderia orbicola (strain MC0-3).